The following is a 106-amino-acid chain: MNDSEFHRLTDTLWMTIEERLDDWDGDSDIDCEINGGVLTITFENGSKIIINRQEPLHQVWLATKQGGYHFDLKGDEWICDRSGETFWDLLEQAATQQAGEAVSFR.

Belongs to the frataxin family.

Its function is as follows. Involved in iron-sulfur (Fe-S) cluster assembly. May act as a regulator of Fe-S biogenesis. The protein is Iron-sulfur cluster assembly protein CyaY of Citrobacter koseri (strain ATCC BAA-895 / CDC 4225-83 / SGSC4696).